Consider the following 323-residue polypeptide: Sphingolipid delta(4)-desaturase DES1 (323 aa).

A run of 2 helical transmembrane segments spans residues 41 to 61 (YNLI…FYLV) and 68 to 88 (WVVF…TLAI). Positions 89-93 (HEISH) match the Histidine box-1 motif. Residues 102–122 (AMWNRWFGIFANLPLGLPYSI) form a helical membrane-spanning segment. The Histidine box-2 signature appears at 128–132 (HMDHH). The next 3 helical transmembrane spans lie at 159–179 (KFIW…CINP), 185–205 (LEII…YLWG), and 209–229 (IFYM…SGHF). The Histidine box-3 signature appears at 259–263 (HNEHH).

The protein belongs to the fatty acid desaturase type 1 family. DEGS subfamily. Interacts with RLBP1; the interaction increases synthesis of chromophore-precursors by DEGS1. In terms of tissue distribution, expressed in retina and retinal pigment epithelium by Mueller cells (at protein level).

The protein resides in the endoplasmic reticulum membrane. It carries out the reaction an N-acylsphinganine + 2 Fe(II)-[cytochrome b5] + O2 + 2 H(+) = an N-acylsphing-4-enine + 2 Fe(III)-[cytochrome b5] + 2 H2O. The enzyme catalyses all-trans-retinol = 11-cis-retinol. It catalyses the reaction all-trans-retinol = 9-cis-retinol. The catalysed reaction is all-trans-retinol = 13-cis-retinol. It carries out the reaction 11-cis-retinol = 13-cis-retinol. The enzyme catalyses 11-cis-retinol = 9-cis-retinol. In terms of biological role, has sphingolipid-delta-4-desaturase activity. Converts D-erythro-sphinganine to D-erythro-sphingosine (E-sphing-4-enine). Catalyzes the equilibrium isomerization of retinols. In Gallus gallus (Chicken), this protein is Sphingolipid delta(4)-desaturase DES1 (DEGS1).